The chain runs to 201 residues: Glycine-rich protein 23 (201 aa).

The N-terminal stretch at 1-24 (MGLISGKVCVFIFVFALVAEFSFG) is a signal peptide. Repeat copies occupy residues 62–67 (GLGGGG), 68–73 (GLGGGG), 74–79 (GLGGGG), 80–85 (GLGGGG), 86–91 (GLGGGG), 92–97 (GLGGGG), 98–103 (GLGGGS), 104–109 (GLGGGG), 110–115 (GLGGGS), 116–121 (GLGGGG), 122–129 (GLGGGGGG), 130–135 (GLGGGG), 136–143 (GLGGGAGG), 144–151 (GYGGGAGG), 152–157 (GLGGGG), 158–163 (GIGGGG), 164–169 (GFGGGG), 170–175 (GGGFGG), 176–182 (GAGGGFG), 184–189 (GIGGGG), and 190–194 (GLGGG). A 21 X 6 AA approximate tandem repeats of G-L-G-G-G-G, Gly-rich region spans residues 62–194 (GLGGGGGLGG…IGGGGGLGGG (133 aa)).

This Arabidopsis thaliana (Mouse-ear cress) protein is Glycine-rich protein 23.